The sequence spans 260 residues: Small ribosomal subunit protein uS3 (260 aa).

In terms of domain architecture, KH type-2 spans 39–114 (LRQYIEQKLG…QIRINVVEVQ (76 aa)). Residues 218–260 (QEVATPPPSPRDRDRDRGDRDREPRRRQQQRRRQQFEDRSNEG) form a disordered region. 2 stretches are compositionally biased toward basic and acidic residues: residues 227–243 (PRDR…EPRR) and 251–260 (QQFEDRSNEG).

It belongs to the universal ribosomal protein uS3 family. In terms of assembly, part of the 30S ribosomal subunit. Forms a tight complex with proteins S10 and S14.

In terms of biological role, binds the lower part of the 30S subunit head. Binds mRNA in the 70S ribosome, positioning it for translation. The chain is Small ribosomal subunit protein uS3 from Nostoc sp. (strain PCC 7120 / SAG 25.82 / UTEX 2576).